The sequence spans 174 residues: Cytochrome c-type biogenesis protein CcmE (174 aa).

Over 1 to 7 the chain is Cytoplasmic; sequence MTRKSRR. Residues 8–28 form a helical; Signal-anchor for type II membrane protein membrane-spanning segment; sequence LILIGAGLGVLALAAGLILTA. Residues 29–174 are Periplasmic-facing; that stretch reads LNDTIVFFRT…PAVSPARSTP (146 aa). Positions 121 and 125 each coordinate heme. The segment covering 130–144 has biased composition (basic and acidic residues); the sequence is VADALKKSGHWKEGE. The segment at 130–174 is disordered; sequence VADALKKSGHWKEGEEGGPVPPAAKTPGPQSSAAPPAVSPARSTP. A compositionally biased stretch (low complexity) spans 156-174; sequence PGPQSSAAPPAVSPARSTP.

It belongs to the CcmE/CycJ family.

It is found in the cell inner membrane. In terms of biological role, heme chaperone required for the biogenesis of c-type cytochromes. Transiently binds heme delivered by CcmC and transfers the heme to apo-cytochromes in a process facilitated by CcmF and CcmH. In Azorhizobium caulinodans (strain ATCC 43989 / DSM 5975 / JCM 20966 / LMG 6465 / NBRC 14845 / NCIMB 13405 / ORS 571), this protein is Cytochrome c-type biogenesis protein CcmE.